The primary structure comprises 376 residues: MESYDIIANQPVVIDNGSGVIKAGFAGDQIPKYCFPNYVGRPKHMRVMAGALEGDLFIGPKAEEHRGLLTIRYPMEHGVVRDWNDMERIWQYVYSKDQLQTFSEEHPVLLTEAPLNPSKNREKAAEVFFETFNVPALFISMQAVLSLYATGRTTGVVLDSGDGVTHAVPIYEGFAMPHSIMRVDIAGRDVSRYLRLLLRKEGADFHTSAEFEVVRTIKERACYLSINPQKDEALETEKVQYTLPDGSTLDVGPARFRAPELLFQPDLVGDESEGLHEVLAFAIHKSDMDLRRTLFSNIVLSGGSTLFKGFGDRLLSEVKKLAPKDVKIKISAPQERLYSTWIGGSILASLDTFKKMWVSKKEYEEDGSRAIHRKTF.

Met-1 carries the post-translational modification N-acetylmethionine. At Tyr-4 the chain carries 3'-nitrotyrosine.

This sequence belongs to the actin family. ARP1 subfamily.

It is found in the cytoplasm. The protein localises to the cytoskeleton. The protein resides in the microtubule organizing center. It localises to the centrosome. Component of a multi-subunit complex involved in microtubule based vesicle motility. It is associated with the centrosome. The chain is Beta-centractin (Actr1b) from Mus musculus (Mouse).